The primary structure comprises 114 residues: Histone H3-7 (114 aa).

A compositionally biased stretch (basic residues) spans 1-17 (NTGGKAPRKHIAHKQAK). Positions 1–32 (NTGGKAPRKHIAHKQAKKSSAAAATGGVKKPH) are disordered. The span at 18-28 (KSSAAAATGGV) shows a compositional bias: low complexity.

It belongs to the histone H3 family. In terms of assembly, the nucleosome is a histone octamer containing two molecules each of H2A, H2B, H3 and H4 assembled in one H3-H4 heterotetramer and two H2A-H2B heterodimers. The octamer wraps approximately 147 bp of DNA.

It localises to the nucleus. The protein resides in the chromosome. Its function is as follows. Core component of nucleosome. Nucleosomes wrap and compact DNA into chromatin, limiting DNA accessibility to the cellular machineries which require DNA as a template. Histones thereby play a central role in transcription regulation, DNA repair, DNA replication and chromosomal stability. DNA accessibility is regulated via a complex set of post-translational modifications of histones, also called histone code, and nucleosome remodeling. The polypeptide is Histone H3-7 (H3-7) (Stylonychia lemnae (Ciliate)).